Consider the following 257-residue polypeptide: Glutamate racemase (257 aa).

Substrate contacts are provided by residues 12–13 and 44–45; these read DS and YG. The active-site Proton donor/acceptor is Cys75. 76-77 contributes to the substrate binding site; the sequence is NT. The Proton donor/acceptor role is filled by Cys185. Residue 186 to 187 participates in substrate binding; that stretch reads TH.

This sequence belongs to the aspartate/glutamate racemases family.

The catalysed reaction is L-glutamate = D-glutamate. It participates in cell wall biogenesis; peptidoglycan biosynthesis. Its function is as follows. Provides the (R)-glutamate required for cell wall biosynthesis. The chain is Glutamate racemase from Clostridium botulinum (strain Kyoto / Type A2).